Here is a 742-residue protein sequence, read N- to C-terminus: Collectin-12 (742 aa).

At 1–37 the chain is on the cytoplasmic side; the sequence is MKDDFAEEEEVQSFGYKRFGIQEGTQCTKCKNNWALK. A helical; Signal-anchor for type II membrane protein transmembrane segment spans residues 38–58; it reads FSIILLYVLCALLTITVAILG. Residues 59-742 lie on the Extracellular side of the membrane; that stretch reads YKVVEKMDTV…EREAVPSSIL (684 aa). Residues 104–142 are a coiled coil; sequence TNSELSTFRSDILDLRQQLQEITEKTSKNKDMLEKLQAN. N-linked (GlcNAc...) asparagine glycans are attached at residues asparagine 159, asparagine 168, and asparagine 271. Residues 220–301 adopt a coiled-coil conformation; that stretch reads ITNLQRSVDD…SFTGQMDNIT (82 aa). Residues 439–608 form a disordered region; the sequence is TILQGPPGPR…TPASEVNGCP (170 aa). 2 consecutive Collagen-like domains span residues 452–511 and 527–586; these read GDRG…KGSR and GPPG…PGPS. Residues 501 to 514 show a composition bias toward low complexity; it reads SKGSQGPKGSRGSP. The span at 516–532 shows a compositional bias: pro residues; sequence KPGPQGPSGDPGPPGPP. The segment covering 534-556 has biased composition (low complexity); the sequence is KDGLPGPQGPPGFQGLQGTVGEP. Positions 571–585 are enriched in pro residues; sequence PGMPGPKGPPGPPGP. Intrachain disulfides connect cysteine 607-cysteine 618, cysteine 635-cysteine 730, and cysteine 708-cysteine 722. A C-type lectin domain is found at 614–731; that stretch reads FTDKCYYFSV…CDEINNFICE (118 aa). Residues phenylalanine 644, asparagine 646, glutamate 650, aspartate 670, and glutamate 674 each coordinate Ca(2+). A carbohydrate-binding residues include lysine 691, glutamine 694, and aspartate 696. Residues glutamine 694, aspartate 696, asparagine 697, glutamate 706, aspartate 707, asparagine 718, aspartate 719, and glutamate 731 each contribute to the Ca(2+) site. Residue glutamate 706 participates in a carbohydrate binding. The a carbohydrate site is built by asparagine 718 and aspartate 719.

The extracellular domain forms a stable trimer. The extracellular domain interacts with fibrillar amyloid-beta peptide. In terms of tissue distribution, highly expressed in lung, spleen, small and large intestine, stomach and brain. Expressed in neonatal microglia.

Its subcellular location is the membrane. Scavenger receptor that displays several functions associated with host defense. Promotes binding and phagocytosis of Gram-positive, Gram-negative bacteria and yeast. Mediates the recognition, internalization and degradation of oxidatively modified low density lipoprotein (oxLDL) by vascular endothelial cells. Binds to several carbohydrates including Gal-type ligands, D-galactose, L- and D-fucose, GalNAc, T and Tn antigens in a calcium-dependent manner and internalizes specifically GalNAc in nurse-like cells. Also binds to sialyl Lewis X or a trisaccharide and asialo-orosomucoid (ASOR). This is Collectin-12 (Colec12) from Rattus norvegicus (Rat).